Reading from the N-terminus, the 136-residue chain is Nodulation protein K (136 aa).

The protein is Nodulation protein K (nodK) of Bradyrhizobium sp. (strain ANU 289).